The following is a 491-amino-acid chain: Cobyric acid synthase (491 aa).

One can recognise a GATase cobBQ-type domain in the interval 250-439; sequence EVTIAVIRLP…LHGIFDNGAW (190 aa). Cys331 serves as the catalytic Nucleophile. His431 is a catalytic residue.

Belongs to the CobB/CobQ family. CobQ subfamily.

It functions in the pathway cofactor biosynthesis; adenosylcobalamin biosynthesis. In terms of biological role, catalyzes amidations at positions B, D, E, and G on adenosylcobyrinic A,C-diamide. NH(2) groups are provided by glutamine, and one molecule of ATP is hydrogenolyzed for each amidation. This chain is Cobyric acid synthase, found in Synechococcus elongatus (strain ATCC 33912 / PCC 7942 / FACHB-805) (Anacystis nidulans R2).